The primary structure comprises 288 residues: Keratin-associated protein 5-4 (288 aa).

9 repeat units span residues 49–52 (CCVP), 55–58 (CCKP), 61–64 (CCVP), 201–204 (CCKP), 220–223 (CCKP), 239–242 (CCKP), 249–252 (CCKP), 268–271 (CCNP), and 278–281 (CCVP). Residues 49 to 281 (CCVPICCCKP…CCSQSSCCVP (233 aa)) form a 9 X 4 AA repeats of C-C-X-P region.

The protein belongs to the KRTAP type 5 family. As to quaternary structure, interacts with hair keratins. As to expression, restricted to hair root, not detected in any other tissues.

Its function is as follows. In the hair cortex, hair keratin intermediate filaments are embedded in an interfilamentous matrix, consisting of hair keratin-associated protein (KRTAP), which are essential for the formation of a rigid and resistant hair shaft through their extensive disulfide bond cross-linking with abundant cysteine residues of hair keratins. The matrix proteins include the high-sulfur and high-glycine-tyrosine keratins. The sequence is that of Keratin-associated protein 5-4 (KRTAP5-4) from Homo sapiens (Human).